A 581-amino-acid polypeptide reads, in one-letter code: Estrogen receptor (581 aa).

The interval 1–144 (MYPEDSRVSG…GFEMAKEMRF (144 aa)) is modulating. Disordered stretches follow at residues 45 to 66 (APLD…SGPN) and 99 to 123 (RSSV…DSYS). Positions 56–66 (GSLQSLGSGPN) are enriched in polar residues. Residues 142–217 (MRFCAVCSDY…VGMMKGGVRK (76 aa)) constitute a DNA-binding region (nuclear receptor). NR C4-type zinc fingers lie at residues 145-165 (CAVC…CEGC) and 181-200 (CPAT…CQAC). The segment at 211–272 (MKGGVRKDRG…GGGKSSVISM (62 aa)) is hinge. Over residues 216–246 (RKDRGRVLRRDKRRTGTSDRDKASKGLEHRT) the composition is skewed to basic and acidic residues. Residues 216 to 269 (RKDRGRVLRRDKRRTGTSDRDKASKGLEHRTAPPQDRRKHISSSAGGGGGKSSV) are disordered. One can recognise an NR LBD domain in the interval 273-509 (PPDQVLLLLR…DLLLEMLDAH (237 aa)). Basic and acidic residues predominate over residues 514-528 (PDRPAETWSQADREP). The tract at residues 514–581 (PDRPAETWSQ…VHPHPMKPTE (68 aa)) is disordered. Residues 572-581 (VHPHPMKPTE) are compositionally biased toward basic residues.

The protein belongs to the nuclear hormone receptor family. NR3 subfamily. As to quaternary structure, binds DNA as a homodimer. Can form a heterodimer with ER-beta.

It localises to the nucleus. Its function is as follows. The steroid hormones and their receptors are involved in the regulation of eukaryotic gene expression and affect cellular proliferation and differentiation in target tissues. This chain is Estrogen receptor (esr1), found in Sparus aurata (Gilthead sea bream).